Here is a 264-residue protein sequence, read N- to C-terminus: tRNA-uridine aminocarboxypropyltransferase A (264 aa).

4 residues coordinate Zn(2+): Cys-25, Cys-28, Cys-35, and Cys-37. Positions Asp-144–Trp-147 match the DXTW motif. The interval Arg-245–Glu-264 is disordered. A compositionally biased stretch (polar residues) spans Gln-254–Glu-264.

It belongs to the TDD superfamily. DTWD2 family.

It carries out the reaction a uridine in tRNA + S-adenosyl-L-methionine = a 3-[(3S)-3-amino-3-carboxypropyl]uridine in tRNA + S-methyl-5'-thioadenosine + H(+). Functionally, catalyzes the formation of 3-(3-amino-3-carboxypropyl)uridine (acp3U) at position 20a in the D-loop of several cytoplasmic tRNAs (acp3U(20a)). The sequence is that of tRNA-uridine aminocarboxypropyltransferase A from Arabidopsis thaliana (Mouse-ear cress).